Here is a 364-residue protein sequence, read N- to C-terminus: UDP-N-acetylglucosamine--N-acetylmuramyl-(pentapeptide) pyrophosphoryl-undecaprenol N-acetylglucosamine transferase (364 aa).

UDP-N-acetyl-alpha-D-glucosamine-binding positions include 10–12 (TAG), Asn-124, Arg-161, Ser-195, and Gln-291.

Belongs to the glycosyltransferase 28 family. MurG subfamily.

It localises to the cell membrane. It carries out the reaction di-trans,octa-cis-undecaprenyl diphospho-N-acetyl-alpha-D-muramoyl-L-alanyl-D-glutamyl-meso-2,6-diaminopimeloyl-D-alanyl-D-alanine + UDP-N-acetyl-alpha-D-glucosamine = di-trans,octa-cis-undecaprenyl diphospho-[N-acetyl-alpha-D-glucosaminyl-(1-&gt;4)]-N-acetyl-alpha-D-muramoyl-L-alanyl-D-glutamyl-meso-2,6-diaminopimeloyl-D-alanyl-D-alanine + UDP + H(+). It functions in the pathway cell wall biogenesis; peptidoglycan biosynthesis. Its function is as follows. Cell wall formation. Catalyzes the transfer of a GlcNAc subunit on undecaprenyl-pyrophosphoryl-MurNAc-pentapeptide (lipid intermediate I) to form undecaprenyl-pyrophosphoryl-MurNAc-(pentapeptide)GlcNAc (lipid intermediate II). This chain is UDP-N-acetylglucosamine--N-acetylmuramyl-(pentapeptide) pyrophosphoryl-undecaprenol N-acetylglucosamine transferase, found in Streptomyces coelicolor (strain ATCC BAA-471 / A3(2) / M145).